We begin with the raw amino-acid sequence, 120 residues long: MTRVLVVDDAKFMRVKIREILEEANYIIAGEAADGEQAADLYKKLRPDLVTMDITMPVKNGIKALRDILTFDPKAKVIMCTAMRQQRIVTEAIELGAKDFIVKPFEETKVLEAVSRVMGH.

The Response regulatory domain occupies Arg3–Met118. Position 53 is a 4-aspartylphosphate (Asp53).

This is Protein CcdB (ccdB) from Bacillus subtilis (strain 168).